A 251-amino-acid polypeptide reads, in one-letter code: 2,3-bisphosphoglycerate-dependent phosphoglycerate mutase 2 (251 aa).

Residues 8–15 (RHGESTWN), 21–22 (TG), Arg-60, 87–90 (ERHY), Lys-98, 114–115 (RR), and 183–184 (GN) each bind substrate. The active-site Tele-phosphohistidine intermediate is His-9. Glu-87 serves as the catalytic Proton donor/acceptor.

Belongs to the phosphoglycerate mutase family. BPG-dependent PGAM subfamily. In terms of assembly, homodimer.

It catalyses the reaction (2R)-2-phosphoglycerate = (2R)-3-phosphoglycerate. It participates in carbohydrate degradation; glycolysis; pyruvate from D-glyceraldehyde 3-phosphate: step 3/5. Functionally, catalyzes the interconversion of 2-phosphoglycerate and 3-phosphoglycerate. This is 2,3-bisphosphoglycerate-dependent phosphoglycerate mutase 2 from Nitrosospira multiformis (strain ATCC 25196 / NCIMB 11849 / C 71).